We begin with the raw amino-acid sequence, 4834 residues long: E3 ubiquitin-protein ligase HERC2 (4834 aa).

The segment at 50–88 (TESTQNGELPPRKDDSVEPSGTKKEDLNDKEKKDEEETP) is disordered. Over residues 59 to 84 (PPRKDDSVEPSGTKKEDLNDKEKKDE) the composition is skewed to basic and acidic residues. A Phosphothreonine modification is found at Thr272. An RCC1 1-1 repeat occupies 415-461 (PTSHKGSLQEVIGWGLIGWKYYANVIGPIQCEGLANLGVTQIACAEK). One copy of the RCC1 1-2 repeat lies at 462–512 (RFLILSRNGRVYTQAYNSDTLAPQLVQGLASRNIVKIAAHSDGHHYLALAA). Residues 513–568 (TGEVYSWGCGDGGRLGHGDTVPLEEPKVISAFSGKQAGKHVVHIACGSTYSAAITA) form an RCC1 1-3 repeat. The stretch at 569–620 (EGELYTWGRGNYGRLGHGSSEDEAIPMLVAGLKGLKVIDVACGSGDAQTLAV) is one RCC1 1-4 repeat. Residues 623-674 (NGQVWSWGDGDYGKLGRGGSDGCKTPKLIEKLQDLDVVKVRCGSQFSIALTK) form an RCC1 1-5 repeat. Thr647 bears the Phosphothreonine mark. An RCC1 1-6 repeat occupies 675–726 (DGQVYSWGKGDNQRLGHGTEEHVRYPKLLEGLQGKKVIDVAAGSTHCLALTE). The stretch at 728 to 778 (SEVHSWGSNDQCQHFDTLRVTKPEPAALPGLDTKHIVGIACGPAQSFAWSS) is one RCC1 1-7 repeat. Positions 948 to 980 (LHAAITAEIQDIEAKKEAQKEKEIDEQEANAST) form a coiled coil. The region spanning 1207 to 1283 (VTLIRKADLE…MHAFCVGQYL (77 aa)) is the Cytochrome b5 heme-binding domain. The tract at residues 1555 to 1575 (RKKRVPKKPESTDDEEKIGNE) is disordered. Residues 1566–1575 (TDDEEKIGNE) show a composition bias toward acidic residues. Ser1577 bears the Phosphoserine mark. In terms of domain architecture, MIB/HERC2 spans 1859–1932 (SGPELAAMMK…KYDLKLAELP (74 aa)). Residues 1933–1958 (AAAQPSAEDSDTEDDSEAEQTERNIH) are disordered. Over residues 1940–1951 (EDSDTEDDSEAE) the composition is skewed to acidic residues. Phosphoserine is present on Ser1942. Thr1944 carries the post-translational modification Phosphothreonine. The residue at position 2454 (Ser2454) is a Phosphoserine. The CPH domain occupies 2554 to 2630 (RADFLSNDDY…RYIHVELIGY (77 aa)). The segment at 2703–2755 (HPGVTCDGCQMFPINGSRFKCRNCDDFDFCETCFKTKKHNTRHTFGRINEPGQ) adopts a ZZ-type zinc-finger fold. Positions 2708, 2711, 2723, 2726, 2732, 2735, 2741, and 2745 each coordinate Zn(2+). The 178-residue stretch at 2759–2936 (FCGRSGKQLK…ASDNEEEEDE (178 aa)) folds into the DOC domain. Ser2928 bears the Phosphoserine mark. The RCC1 2-1 repeat unit spans residues 2958 to 3009 (RTKVFVWGLNDKDQLGGLKGSKIKVPSFSETLSALNVVQVAGGSKSLFAVTV). Residues 3010-3064 (EGKVYACGEATNGRLGLGISSGTVPIPRQITALSSYVVKKVAVHSGGRHATALTV) form an RCC1 2-2 repeat. The RCC1 2-3 repeat unit spans residues 3065–3116 (DGKVFSWGEGDDGKLGHFSRMNCDKPRLIEALKTKRIRDIACGSSHSAALTS). An RCC1 2-4 repeat occupies 3118-3168 (GELYTWGLGEYGRLGHGDNTTQLKPKMVKVLLGHRVIQVACGSRDAQTLAL). The stretch at 3171-3222 (EGLVFSWGDGDFGKLGRGGSEGCNIPQNIERLNGQGVCQIECGAQFSLALTK) is one RCC1 2-5 repeat. One copy of the RCC1 2-6 repeat lies at 3224–3274 (GVVWTWGKGDYFRLGHGSDVHVRKPQVVEGLRGKKIVHVAVGALHCLAVTD). Residues 3275 to 3326 (SGQVYAWGDNDHGQQGNGTTTVNRKPTLVQGLEGQKITRVACGSSHSVAWTT) form an RCC1 2-7 repeat. Polar residues-rich tracts occupy residues 3602–3611 (SQSGRLSSQP) and 3618–3629 (HPYTDDTSTSGT). The disordered stretch occupies residues 3602-3629 (SQSGRLSSQPVVVESSHPYTDDTSTSGT). Residues 3951–4002 (SGTIYGWGHNHRGQLGGIEGAKVKVPTPCEALATLRPVQLIGGEQTLFAVTA) form an RCC1 3-1 repeat. An RCC1 3-2 repeat occupies 4004–4056 (GKLYATGYGAGGRLGIGGTESVSTPTLLESIQHVFIKKVAVNSGGKHCLALSS). One copy of the RCC1 3-3 repeat lies at 4058-4108 (GEVYSWGEAEDGKLGHGNRSPCDRPRVIESLRGIEVVDVAAGGAHSACVTA). Residues 4110–4162 (GDLYTWGKGRYGRLGHSDSEDQLKPKLVEALQGHRVVDIACGSGDAQTLCLTD) form an RCC1 3-4 repeat. The RCC1 3-5 repeat unit spans residues 4164–4214 (DTVWSWGDGDYGKLGRGGSDGCKVPMKIDSLTGLGVVKVECGSQFSVALTK). The stretch at 4216–4266 (GAVYTWGKGDYHRLGHGSDDHVRRPRQVQGLQGKKVIAIATGSLHCVCCTE) is one RCC1 3-6 repeat. The stretch at 4268 to 4318 (GEVYTWGDNDEGQLGDGTTNAIQRPRLVAALQGKKVNRVACGSAHTLAWST) is one RCC1 3-7 repeat. An HECT domain is found at 4457–4794 (DSLLLPHRVW…IHFCKSIDTD (338 aa)). Cys4762 functions as the Glycyl thioester intermediate in the catalytic mechanism. A disordered region spans residues 4804–4834 (EPAADDSSDDSDNEDVDSFASDSTQDYLTGH). Residues 4806 to 4820 (AADDSSDDSDNEDVD) are compositionally biased toward acidic residues. 3 positions are modified to phosphoserine: Ser4810, Ser4811, and Ser4814. Over residues 4823–4834 (ASDSTQDYLTGH) the composition is skewed to polar residues. Thr4827 bears the Phosphothreonine mark.

Interacts (when phosphorylated at Thr-4827 and sumoylated) with RNF8 (via FHA domain); this interaction increases after ionizing radiation (IR) treatment. Interacts with XPA. Interacts with NEURL4. Via its interaction with NEURL4, may indirectly interact with CCP110 and CEP97. Post-translationally, phosphorylation at Thr-4827 is required for interaction with RNF8. In terms of processing, sumoylated with SUMO1 by PIAS4 in response to double-strand breaks (DSBs), promoting the interaction with RNF8.

The protein localises to the cytoplasm. Its subcellular location is the cytoskeleton. It is found in the microtubule organizing center. The protein resides in the centrosome. It localises to the centriole. The protein localises to the nucleus. It carries out the reaction S-ubiquitinyl-[E2 ubiquitin-conjugating enzyme]-L-cysteine + [acceptor protein]-L-lysine = [E2 ubiquitin-conjugating enzyme]-L-cysteine + N(6)-ubiquitinyl-[acceptor protein]-L-lysine.. Its pathway is protein modification; protein ubiquitination. Its function is as follows. E3 ubiquitin-protein ligase that regulates ubiquitin-dependent retention of repair proteins on damaged chromosomes. Recruited to sites of DNA damage in response to ionizing radiation (IR) and facilitates the assembly of UBE2N and RNF8 promoting DNA damage-induced formation of 'Lys-63'-linked ubiquitin chains. Acts as a mediator of binding specificity between UBE2N and RNF8. Involved in the maintenance of RNF168 levels. E3 ubiquitin-protein ligase that promotes the ubiquitination and proteasomal degradation of XPA which influences the circadian oscillation of DNA excision repair activity. By controlling the steady-state expression of the IGF1R receptor, indirectly regulates the insulin-like growth factor receptor signaling pathway. Also modulates iron metabolism by regulating the basal turnover of FBXL5. The chain is E3 ubiquitin-protein ligase HERC2 from Homo sapiens (Human).